Reading from the N-terminus, the 91-residue chain is RNA-binding protein Hfq (91 aa).

Residues 9–68 (DPFLNALRRERVPVSIYLVNGIKLQGQVESFDQFVILLKNTVSQMVYKHAISTVVPSRPF) form the Sm domain. Residues 66 to 91 (RPFNVGSHQGGSSNYNAQQDDSAGEQ) form a disordered region. Residues 71–91 (GSHQGGSSNYNAQQDDSAGEQ) show a composition bias toward polar residues.

The protein belongs to the Hfq family. As to quaternary structure, homohexamer.

In terms of biological role, RNA chaperone that binds small regulatory RNA (sRNAs) and mRNAs to facilitate mRNA translational regulation in response to envelope stress, environmental stress and changes in metabolite concentrations. Also binds with high specificity to tRNAs. The chain is RNA-binding protein Hfq from Shewanella amazonensis (strain ATCC BAA-1098 / SB2B).